A 676-amino-acid polypeptide reads, in one-letter code: DNA ligase (676 aa).

NAD(+) is bound by residues 34 to 38 (DAEYD), 84 to 85 (SL), and Glu116. Lys118 serves as the catalytic N6-AMP-lysine intermediate. Arg139, Glu174, Lys294, and Lys318 together coordinate NAD(+). 4 residues coordinate Zn(2+): Cys412, Cys415, Cys428, and Cys433. The BRCT domain occupies 589–676 (KGGEALKGLT…RTGKKAEELV (88 aa)).

It belongs to the NAD-dependent DNA ligase family. LigA subfamily. It depends on Mg(2+) as a cofactor. Mn(2+) serves as cofactor.

The catalysed reaction is NAD(+) + (deoxyribonucleotide)n-3'-hydroxyl + 5'-phospho-(deoxyribonucleotide)m = (deoxyribonucleotide)n+m + AMP + beta-nicotinamide D-nucleotide.. Its function is as follows. DNA ligase that catalyzes the formation of phosphodiester linkages between 5'-phosphoryl and 3'-hydroxyl groups in double-stranded DNA using NAD as a coenzyme and as the energy source for the reaction. It is essential for DNA replication and repair of damaged DNA. This is DNA ligase from Thermus thermophilus (strain ATCC 27634 / DSM 579 / HB8).